Consider the following 769-residue polypeptide: Polymeric immunoglobulin receptor (769 aa).

The N-terminal stretch at 1–18 is a signal peptide; the sequence is MRLSLFALLVTVFSGVST. Topologically, residues 19-643 are extracellular; it reads QSPIFGPQDV…SAGGQSGSSK (625 aa). The Ig-like V-type 1; required for binding to polymeric IgA and IgM domain maps to 21 to 126; that stretch reads PIFGPQDVSS…RGLFFDVSLE (106 aa). A disulfide bond links C40 and C110. Residues N90, N135, and N206 are each glycosylated (N-linked (GlcNAc...) asparagine). Ig-like V-type domains are found at residues 135 to 237, 240 to 341, 353 to 457, and 463 to 563; these read NDTH…DLQV, PEPE…VQAW, NSRS…LQVA, and PDLE…IYVA. 3 cysteine pairs are disulfide-bonded: C152–C220, C257–C324, and C370–C440. N-linked (GlcNAc...) asparagine glycosylation is present at N471. The cysteines at positions 484 and 546 are disulfide-linked. Disordered regions lie at residues 569 to 604 and 619 to 640; these read RGSP…NKAN and AGDQ…GQSG. The segment covering 595 to 604 has biased composition (basic and acidic residues); the sequence is SVREDENKAN. The helical transmembrane segment at 644-666 threads the bilayer; it reads VLFSTLVPLGLVLAVGAVAVWVA. Topologically, residues 667–769 are cytoplasmic; that stretch reads RVRHRKNVDR…AQVHDGPQEA (103 aa). Residues S678, S687, S694, and S740 each carry the phosphoserine modification. The segment at 719-741 is disordered; it reads EIETTTECTTEPEESKKAKRSSK. Residues 731 to 741 are compositionally biased toward basic and acidic residues; sequence EESKKAKRSSK.

Interacts (mainly via CDR1-like domain) with dimeric IgA. Interacts (mainly via CDR2-like domain) with pentameric IgM. In terms of assembly, either free or part of the secretory IgA (sIgA) complex that consists of two, four or five IgA monomers, and two additional non-Ig polypeptides, namely the JCHAIN and the secretory component (the proteolytic product of PIGR). Free secretory component interacts with bacterial antigens toxA of C.difficile and eae of E.coli. In terms of processing, N-glycosylated. N-glycosylation is required for anchoring IgA molecules to mucus, but is not necessary for Ig binding.

Its subcellular location is the cell membrane. It localises to the secreted. Functionally, mediates selective transcytosis of polymeric IgA and IgM across mucosal epithelial cells. Binds polymeric IgA and IgM at the basolateral surface of epithelial cells. The complex is then transported across the cell to be secreted at the apical surface. During this process, a cleavage occurs that separates the extracellular (known as the secretory component) from the transmembrane segment. In terms of biological role, through its N-linked glycans ensures anchoring of secretory IgA (sIgA) molecules to mucus lining the epithelial surface to neutralize extracellular pathogens. On its own (free form) may act as a non-specific microbial scavenger to prevent pathogen interaction with epithelial cells. The sequence is that of Polymeric immunoglobulin receptor (Pigr) from Rattus norvegicus (Rat).